The primary structure comprises 39 residues: Cytochrome b559 subunit beta (39 aa).

The helical transmembrane segment at 14-30 (WLAIHGLAVPTVFSLGS) threads the bilayer. Position 18 (H18) interacts with heme.

This sequence belongs to the PsbE/PsbF family. In terms of assembly, heterodimer of an alpha subunit and a beta subunit. PSII is composed of 1 copy each of membrane proteins PsbA, PsbB, PsbC, PsbD, PsbE, PsbF, PsbH, PsbI, PsbJ, PsbK, PsbL, PsbM, PsbT, PsbX, PsbY, PsbZ, Psb30/Ycf12, at least 3 peripheral proteins of the oxygen-evolving complex and a large number of cofactors. It forms dimeric complexes. Requires heme b as cofactor.

It localises to the plastid. Its subcellular location is the chloroplast thylakoid membrane. This b-type cytochrome is tightly associated with the reaction center of photosystem II (PSII). PSII is a light-driven water:plastoquinone oxidoreductase that uses light energy to abstract electrons from H(2)O, generating O(2) and a proton gradient subsequently used for ATP formation. It consists of a core antenna complex that captures photons, and an electron transfer chain that converts photonic excitation into a charge separation. This is Cytochrome b559 subunit beta from Huperzia lucidula (Shining clubmoss).